The primary structure comprises 373 residues: Dual-specificity RNA methyltransferase RlmN (373 aa).

Glu94 (proton acceptor) is an active-site residue. One can recognise a Radical SAM core domain in the interval 100–339; that stretch reads EDDRATLCVS…VIVRKTRGDD (240 aa). An intrachain disulfide couples Cys107 to Cys344. [4Fe-4S] cluster contacts are provided by Cys114, Cys118, and Cys121. S-adenosyl-L-methionine-binding positions include 168–169, Ser200, 222–224, and Asn301; these read GE and SIH. The active-site S-methylcysteine intermediate is Cys344.

Belongs to the radical SAM superfamily. RlmN family. Requires [4Fe-4S] cluster as cofactor.

The protein localises to the cytoplasm. The catalysed reaction is adenosine(2503) in 23S rRNA + 2 reduced [2Fe-2S]-[ferredoxin] + 2 S-adenosyl-L-methionine = 2-methyladenosine(2503) in 23S rRNA + 5'-deoxyadenosine + L-methionine + 2 oxidized [2Fe-2S]-[ferredoxin] + S-adenosyl-L-homocysteine. It catalyses the reaction adenosine(37) in tRNA + 2 reduced [2Fe-2S]-[ferredoxin] + 2 S-adenosyl-L-methionine = 2-methyladenosine(37) in tRNA + 5'-deoxyadenosine + L-methionine + 2 oxidized [2Fe-2S]-[ferredoxin] + S-adenosyl-L-homocysteine. Its function is as follows. Specifically methylates position 2 of adenine 2503 in 23S rRNA and position 2 of adenine 37 in tRNAs. m2A2503 modification seems to play a crucial role in the proofreading step occurring at the peptidyl transferase center and thus would serve to optimize ribosomal fidelity. This chain is Dual-specificity RNA methyltransferase RlmN, found in Shewanella woodyi (strain ATCC 51908 / MS32).